The following is a 278-amino-acid chain: Complement C1q tumor necrosis factor-related protein 6 (278 aa).

An N-terminal signal peptide occupies residues 1 to 46 (MQWLRVRESPGEATGHRVTMGTAALGPVWAALLLFLLMCEIPMVEL). N-linked (GlcNAc...) asparagine glycosylation occurs at N91. In terms of domain architecture, Collagen-like spans 97–138 (GDKGDPGPMGLPGYMGREGPQGEPGPQGSKGDKGEMGSPGAP). The tract at residues 99-135 (KGDPGPMGLPGYMGREGPQGEPGPQGSKGDKGEMGSP) is disordered. The C1q domain occupies 139 to 259 (CQKRFFAFSV…KRQRENAIYS (121 aa)).

The protein localises to the secreted. The polypeptide is Complement C1q tumor necrosis factor-related protein 6 (C1QTNF6) (Homo sapiens (Human)).